Consider the following 228-residue polypeptide: Protein JAZ7 (228 aa).

Residues 101 to 136 form the Tify domain; sequence LSPNESTLTIFYMGEVHIFPGISPEKAELIIDLVSK. Positions 176 to 199 match the Jas motif; sequence MARRATLARFLEKRKHRLIKARPY. A Nuclear localization signal motif is present at residues 177-184; that stretch reads ARRATLAR.

Belongs to the TIFY/JAZ family. As to quaternary structure, interacts with MYC2 (via N-terminus). JAZ7 competes with MED25 for binding to MYC2. Interacts with MTB1 (via N-terminus).

It is found in the nucleus. Functionally, repressor of jasmonate responses. This chain is Protein JAZ7, found in Solanum lycopersicum (Tomato).